The chain runs to 429 residues: Enolase (429 aa).

(2R)-2-phosphoglycerate is bound at residue Gln162. Glu204 functions as the Proton donor in the catalytic mechanism. The Mg(2+) site is built by Asp242, Glu289, and Asp316. (2R)-2-phosphoglycerate is bound by residues Lys341, Arg370, Ser371, and Lys392. Lys341 serves as the catalytic Proton acceptor.

The protein belongs to the enolase family. It depends on Mg(2+) as a cofactor.

It localises to the cytoplasm. Its subcellular location is the secreted. It is found in the cell surface. The catalysed reaction is (2R)-2-phosphoglycerate = phosphoenolpyruvate + H2O. It participates in carbohydrate degradation; glycolysis; pyruvate from D-glyceraldehyde 3-phosphate: step 4/5. Its function is as follows. Catalyzes the reversible conversion of 2-phosphoglycerate (2-PG) into phosphoenolpyruvate (PEP). It is essential for the degradation of carbohydrates via glycolysis. This is Enolase from Flavobacterium psychrophilum (strain ATCC 49511 / DSM 21280 / CIP 103535 / JIP02/86).